The chain runs to 145 residues: Large ribosomal subunit protein uL13 (145 aa).

Belongs to the universal ribosomal protein uL13 family. As to quaternary structure, part of the 50S ribosomal subunit.

In terms of biological role, this protein is one of the early assembly proteins of the 50S ribosomal subunit, although it is not seen to bind rRNA by itself. It is important during the early stages of 50S assembly. This Bacillus cytotoxicus (strain DSM 22905 / CIP 110041 / 391-98 / NVH 391-98) protein is Large ribosomal subunit protein uL13.